A 369-amino-acid chain; its full sequence is p21-activated protein kinase-interacting protein 1-like (369 aa).

WD repeat units follow at residues 33–70 (AHTA…EHGA), 73–111 (QHNG…CLKS), 114–153 (AHKG…SAFI), 195–233 (TIEK…CLCE), and 236–278 (AREN…NNVP). A disordered region spans residues 311 to 369 (ATSTEANESEKPSAVKKKKVCGMNKSGKLTKQRRRIVPAKRKLEAPLQKKKKKKQNSSE). 2 stretches are compositionally biased toward basic residues: residues 338–350 (KLTK…VPAK) and 358–369 (QKKKKKKQNSSE).

Its subcellular location is the nucleus. It localises to the nucleolus. In terms of biological role, negatively regulates the PAK1 kinase. PAK1 is a member of the PAK kinase family, which has been shown to play a positive role in the regulation of signaling pathways involving MAPK8 and RELA. PAK1 exists as an inactive homodimer, which is activated by binding of small GTPases such as CDC42 to an N-terminal regulatory domain. PAK1IP1 also binds to the N-terminus of PAK1, and inhibits the specific activation of PAK1 by CDC42. May be involved in ribosomal large subunit assembly. The polypeptide is p21-activated protein kinase-interacting protein 1-like (PAK1IP1) (Gallus gallus (Chicken)).